Reading from the N-terminus, the 375-residue chain is Acyl-coenzyme A diphosphatase NUDT19 (375 aa).

Positions 15–263 (AASIVLAAGW…IWLPPPQFYE (249 aa)) constitute a Nudix hydrolase domain. Residues 91–116 (LGPAPFSRTAFPSLPDTDDHKTDNTG) are disordered. Residues 116–137 (GTLPEDVAFRICAVREAFEEAG) carry the Nudix box motif. Mg(2+) contacts are provided by Glu-131 and Glu-135. The Microbody targeting signal motif lies at 373 to 375 (SHL).

The protein belongs to the Nudix hydrolase family. In terms of assembly, monomer. It depends on Mg(2+) as a cofactor. Requires Mn(2+) as cofactor.

Its subcellular location is the peroxisome. The enzyme catalyses an acyl-CoA + H2O = an acyl-4'-phosphopantetheine + adenosine 3',5'-bisphosphate + 2 H(+). The catalysed reaction is CoA + H2O = (R)-4'-phosphopantetheine + adenosine 3',5'-bisphosphate + 2 H(+). It carries out the reaction hexanoyl-CoA + H2O = hexanoyl-4'-phosphopantetheine + adenosine 3',5'-bisphosphate + 2 H(+). It catalyses the reaction octanoyl-CoA + H2O = S-octanoyl-4'-phosphopantetheine + adenosine 3',5'-bisphosphate + 2 H(+). The enzyme catalyses butanoyl-CoA + H2O = S-butanoyl-4'-phosphopantetheine + adenosine 3',5'-bisphosphate + 2 H(+). The catalysed reaction is propanoyl-CoA + H2O = propanoyl-4'-phosphopantetheine + adenosine 3',5'-bisphosphate + 2 H(+). It carries out the reaction malonyl-CoA + H2O = malonyl-4'-phosphopantetheine + adenosine 3',5'-bisphosphate + 2 H(+). It catalyses the reaction succinyl-CoA + H2O = succinyl-4'-phosphopantetheine + adenosine 3',5'-bisphosphate + 2 H(+). The enzyme catalyses choloyl-CoA + H2O = S-choloyl-4'-phosphopantetheine + adenosine 3',5'-bisphosphate + 2 H(+). The catalysed reaction is 4,8-dimethylnonanoyl-CoA + H2O = S-(4,8-dimethylnonanoyl)-4'-phosphopantetheine + adenosine 3',5'-bisphosphate + 2 H(+). It carries out the reaction (9Z,12Z,15Z)-octadecatrienoyl-CoA + H2O = S-(9Z,12Z,15Z-octadecatrienoyl)-4'-phosphopantetheine + adenosine 3',5'-bisphosphate + 2 H(+). It catalyses the reaction (9Z,12Z)-octadecadienoyl-CoA + H2O = S-(9Z,12Z-octadecadienoyl)-4'-phosphopantetheine + adenosine 3',5'-bisphosphate + 2 H(+). The enzyme catalyses (9Z)-hexadecenoyl-CoA + H2O = S-(9Z-hexadecenoyl)-4'-phosphopantetheine + adenosine 3',5'-bisphosphate + 2 H(+). The catalysed reaction is (9Z)-tetradecenoyl-CoA + H2O = S-(9Z-tetradecenoyl)-4'-phosphopantetheine + adenosine 3',5'-bisphosphate + 2 H(+). It carries out the reaction (6Z)-octenoyl-CoA + H2O = S-(6Z-octenoyl)-4'-phosphopantetheine + adenosine 3',5'-bisphosphate + 2 H(+). It catalyses the reaction hexadecanoyl-CoA + H2O = S-hexadecanoyl-4'-phosphopantetheine + adenosine 3',5'-bisphosphate + 2 H(+). The enzyme catalyses tetradecanoyl-CoA + H2O = tetradecanoyl-4'-phosphopantetheine + adenosine 3',5'-bisphosphate + 2 H(+). The catalysed reaction is dodecanoyl-CoA + H2O = S-dodecanoyl-4'-phosphopantetheine + adenosine 3',5'-bisphosphate + 2 H(+). It carries out the reaction a 5'-end CoA-ribonucleoside in mRNA + H2O = a 5'-end phospho-adenosine-phospho-ribonucleoside in mRNA + (R)-4'-phosphopantetheine + 2 H(+). In terms of biological role, fatty acyl-coenzyme A (CoA) diphosphatase that hydrolyzes fatty acyl-CoA to yield acyl-4'-phosphopantetheine and adenosine 3',5'-bisphosphate. Mediates the hydrolysis of a wide range of CoA esters, including choloyl-CoA and branched-chain fatty-acyl-CoA esters and at low substrate concentrations medium and long-chain fatty-acyl-CoA esters are the primary substrates. Highest activity seen with medium-chain acyl-CoA esters and higher rates of activity seen with the unsaturated acyl-CoA esters compared with the saturated esters. Exhibits decapping activity towards dpCoA-capped RNAs in vitro. The sequence is that of Acyl-coenzyme A diphosphatase NUDT19 (NUDT19) from Homo sapiens (Human).